A 505-amino-acid chain; its full sequence is Kinesin light chain 3 (505 aa).

A disordered region spans residues 1 to 20; it reads MSVQVAAPGSTGLGPERLNP. The stretch at 90 to 150 forms a coiled coil; it reads ALSAHVGVLE…EEEKSHLQFL (61 aa). The disordered stretch occupies residues 154–197; sequence RQYDPPEESQRPDSPPRRDSLASLFPSEEEEKKGPEAAGAAAAQ. A compositionally biased stretch (basic and acidic residues) spans 161-173; that stretch reads ESQRPDSPPRRDS. Phosphoserine is present on Ser-173. TPR repeat units lie at residues 207-240, 249-282, 291-324, 333-366, and 375-408; these read LRTL…LERS, ATML…REQT, AATL…REKV, AKQL…YEAL, and AKTK…EALP. The interval 409–439 is disordered; the sequence is APLGAPQGGTAGEAQQQVLRRSSSFSKLRES. Residues 421 to 434 are compositionally biased toward polar residues; that stretch reads EAQQQVLRRSSSFS. The residue at position 467 (Ser-467) is a Phosphoserine. The tract at residues 486 to 505 is disordered; it reads QHLNEASRTLSASTQDLSPR. A Phosphothreonine modification is found at Thr-499. Ser-503 is modified (phosphoserine).

It belongs to the kinesin light chain family. As to quaternary structure, oligomer composed of two heavy chains and two light chains. Associates with microtubulin in an ATP-dependent manner. Interacts with KIF5C. Interacts with ODF1. Interacts with LRGUK. Interacts with VDAC2. As to expression, expressed in postmeiotic male germ cells (at protein level).

It is found in the cytoplasm. It localises to the cytoskeleton. The protein resides in the mitochondrion. In terms of biological role, kinesin is a microtubule-associated force-producing protein that may play a role in organelle transport. Plays a role during spermiogenesis in the development of the sperm tail midpiece and in the normal function of spermatozoa. May play a role in the formation of the mitochondrial sheath formation in the developing spermatid midpiece. The chain is Kinesin light chain 3 (Klc3) from Rattus norvegicus (Rat).